The following is a 93-amino-acid chain: Large ribosomal subunit protein uL23 (93 aa).

This sequence belongs to the universal ribosomal protein uL23 family. In terms of assembly, part of the 50S ribosomal subunit. Contacts protein L29, and trigger factor when it is bound to the ribosome.

One of the early assembly proteins it binds 23S rRNA. One of the proteins that surrounds the polypeptide exit tunnel on the outside of the ribosome. Forms the main docking site for trigger factor binding to the ribosome. The polypeptide is Large ribosomal subunit protein uL23 (Opitutus terrae (strain DSM 11246 / JCM 15787 / PB90-1)).